The following is a 929-amino-acid chain: DNA mismatch repair protein MutS (929 aa).

A disordered region spans residues 22–46; that stretch reads PAAPRSTGSAAAPPPSPAVLDDRSG. A compositionally biased stretch (low complexity) spans 23-32; that stretch reads AAPRSTGSAA. 678 to 685 is a binding site for ATP; that stretch reads GPNMAGKS.

This sequence belongs to the DNA mismatch repair MutS family.

Functionally, this protein is involved in the repair of mismatches in DNA. It is possible that it carries out the mismatch recognition step. This protein has a weak ATPase activity. The protein is DNA mismatch repair protein MutS of Rhodospirillum rubrum (strain ATCC 11170 / ATH 1.1.1 / DSM 467 / LMG 4362 / NCIMB 8255 / S1).